The sequence spans 269 residues: Putative carbamate hydrolase RutD (269 aa).

The AB hydrolase-1 domain occupies 26–144 (VVLLSSGLGG…CFDTRLHLLN (119 aa)).

The protein belongs to the AB hydrolase superfamily. Hydrolase RutD family.

It catalyses the reaction carbamate + 2 H(+) = NH4(+) + CO2. Functionally, involved in pyrimidine catabolism. May facilitate the hydrolysis of carbamate, a reaction that can also occur spontaneously. The sequence is that of Putative carbamate hydrolase RutD from Caulobacter vibrioides (strain ATCC 19089 / CIP 103742 / CB 15) (Caulobacter crescentus).